The chain runs to 253 residues: DNA repair protein RecO (253 aa).

The protein belongs to the RecO family.

In terms of biological role, involved in DNA repair and RecF pathway recombination. The protein is DNA repair protein RecO of Dehalococcoides mccartyi (strain ATCC BAA-2100 / JCM 16839 / KCTC 5957 / BAV1).